Here is a 220-residue protein sequence, read N- to C-terminus: Large ribosomal subunit protein uL3 (220 aa).

This sequence belongs to the universal ribosomal protein uL3 family. In terms of assembly, part of the 50S ribosomal subunit. Forms a cluster with proteins L14 and L19.

Functionally, one of the primary rRNA binding proteins, it binds directly near the 3'-end of the 23S rRNA, where it nucleates assembly of the 50S subunit. The sequence is that of Large ribosomal subunit protein uL3 from Staphylococcus haemolyticus (strain JCSC1435).